Reading from the N-terminus, the 309-residue chain is Porphobilinogen deaminase (309 aa).

Cysteine 241 is subject to S-(dipyrrolylmethanemethyl)cysteine.

It belongs to the HMBS family. As to quaternary structure, monomer. Requires dipyrromethane as cofactor.

The enzyme catalyses 4 porphobilinogen + H2O = hydroxymethylbilane + 4 NH4(+). The protein operates within porphyrin-containing compound metabolism; protoporphyrin-IX biosynthesis; coproporphyrinogen-III from 5-aminolevulinate: step 2/4. In terms of biological role, tetrapolymerization of the monopyrrole PBG into the hydroxymethylbilane pre-uroporphyrinogen in several discrete steps. The chain is Porphobilinogen deaminase from Desulforamulus reducens (strain ATCC BAA-1160 / DSM 100696 / MI-1) (Desulfotomaculum reducens).